The chain runs to 312 residues: Homoserine O-acetyltransferase (312 aa).

Cys-142 serves as the catalytic Acyl-thioester intermediate. Residues Lys-163 and Ser-194 each contribute to the substrate site. His-237 acts as the Proton acceptor in catalysis. Glu-239 is a catalytic residue. Arg-251 is a substrate binding site.

The protein belongs to the MetA family.

The protein localises to the cytoplasm. It catalyses the reaction L-homoserine + acetyl-CoA = O-acetyl-L-homoserine + CoA. The protein operates within amino-acid biosynthesis; L-methionine biosynthesis via de novo pathway; O-acetyl-L-homoserine from L-homoserine: step 1/1. Its function is as follows. Transfers an acetyl group from acetyl-CoA to L-homoserine, forming acetyl-L-homoserine. This is Homoserine O-acetyltransferase from Catenibacterium mitsuokai (strain DSM 15897 / JCM 10609 / CCUG 48821 A / CIP 106738 / RCA14-39).